A 333-amino-acid polypeptide reads, in one-letter code: L-lactate dehydrogenase B chain (333 aa).

Residues 29-57 (GQVG…LEDK) and arginine 99 contribute to the NAD(+) site. The substrate site is built by arginine 106, asparagine 138, and arginine 169. An NAD(+)-binding site is contributed by asparagine 138. Catalysis depends on histidine 193, which acts as the Proton acceptor. Threonine 248 is a binding site for substrate.

It belongs to the LDH/MDH superfamily. LDH family. As to quaternary structure, homotetramer.

Its subcellular location is the cytoplasm. It carries out the reaction (S)-lactate + NAD(+) = pyruvate + NADH + H(+). Its pathway is fermentation; pyruvate fermentation to lactate; (S)-lactate from pyruvate: step 1/1. Its function is as follows. Interconverts simultaneously and stereospecifically pyruvate and lactate with concomitant interconversion of NADH and NAD(+). The chain is L-lactate dehydrogenase B chain (LDHB) from Caiman crocodilus apaporiensis (Rio Apaporis caiman).